The chain runs to 243 residues: Cell division protein ZipA (243 aa).

Residues 1–4 (MSDV) are Periplasmic-facing. The chain crosses the membrane as a helical span at residues 5 to 25 (TLLRIGIAIVGILFVAAVFFF). Residues 26–243 (STPKTSAHRV…VPPLIKNSRW (218 aa)) lie on the Cytoplasmic side of the membrane. The interval 32–89 (AHRVRTKKEEPPRERREPMLSTEADNSPPQGVDEVPASVSQQQVNPEANKPGEVQLGK) is disordered. The segment covering 38-49 (KKEEPPRERREP) has biased composition (basic and acidic residues).

This sequence belongs to the ZipA family. As to quaternary structure, interacts with FtsZ via their C-terminal domains.

It is found in the cell inner membrane. In terms of biological role, essential cell division protein that stabilizes the FtsZ protofilaments by cross-linking them and that serves as a cytoplasmic membrane anchor for the Z ring. Also required for the recruitment to the septal ring of downstream cell division proteins. The sequence is that of Cell division protein ZipA from Xylella fastidiosa (strain 9a5c).